The sequence spans 289 residues: Pyridoxal kinase PdxY (289 aa).

Substrate contacts are provided by residues serine 9 and 44 to 45 (TQ). Aspartate 112, valine 144, glutamate 149, and lysine 182 together coordinate ATP. Residue aspartate 221 participates in substrate binding.

The protein belongs to the pyridoxine kinase family. PdxY subfamily. Homodimer. Mg(2+) is required as a cofactor.

It carries out the reaction pyridoxal + ATP = pyridoxal 5'-phosphate + ADP + H(+). Its pathway is cofactor metabolism; pyridoxal 5'-phosphate salvage; pyridoxal 5'-phosphate from pyridoxal: step 1/1. Its function is as follows. Pyridoxal kinase involved in the salvage pathway of pyridoxal 5'-phosphate (PLP). Catalyzes the phosphorylation of pyridoxal to PLP. The sequence is that of Pyridoxal kinase PdxY from Vibrio campbellii (strain ATCC BAA-1116).